Reading from the N-terminus, the 415-residue chain is Alditol oxidase (415 aa).

The FAD-binding PCMH-type domain maps to 12 to 179 (ITYTAKEVHR…TALTLDLEPA (168 aa)). Position 46 is a pros-8alpha-FAD histidine (H46). FAD contacts are provided by residues S106, S111, G114, 118-121 (TGTH), and V169. S106 is a xylitol binding site. Residues E317, R319, and T342 each contribute to the xylitol site. R319 contributes to the FAD binding site. Position 369 (H369) interacts with FAD. K372 lines the xylitol pocket.

It belongs to the oxygen-dependent FAD-linked oxidoreductase family. Monomer. FAD is required as a cofactor.

It carries out the reaction an alditol + O2 = an aldose + H2O2. The catalysed reaction is xylitol + O2 = D-xylose + H2O2. The enzyme catalyses D-sorbitol + O2 = D-glucose + H2O2. Oxidase that performs selective oxidation of the terminal primary hydroxyl group of several alditols, with a reduction of O2 to H2O2. Shows highest activity on xylitol and D-sorbitol, and to a lesser extent, can also use galactitol, D-mannitol, and D-arabitol as substrates in vitro. Is not active on D-glucose, D-xylose, D-galactose, D-mannose, D-fructose, L-sorbose, L-fucose, myoinositol, glycerol, ethyl alcohol, and meso-erythritol. This Streptomyces sp. (strain IKD472 / FERM P-14339) protein is Alditol oxidase.